A 350-amino-acid polypeptide reads, in one-letter code: MDFLRNLFTQTLGLGSQKERLLDELTLEGVTRYMQSERCRRVICLVGAGISTSAGIPDFRSPSTGLYANLEKYHLPYPEAIFEISYFKKHPEPFFALAKELYPGQFKPTICHYFIRLLKEKGLLLRCYTQNIDTLERVAGLEPQDLVEAHGTFYTSHCVNTSCGKEYTMSWMKEKIFSEATPKCEKCQNVVKPDIVFFGENLPPRFFSCMQSDFSKVDLLIIMGTSLQVQPFASLISKAPLATPRLLINKEKTGQTDPFLGMMMGLGGGMDFDSKKAYRDVAWLGDCDQGCLALADLLGWKELEDLVRREHANIDAQSGSQASNPSATVSPRKSPPPAKEAARTKEKEEH.

The Nuclear export signal motif lies at 4-14; sequence LRNLFTQTLGL. Residue Ser-16 is modified to Phosphoserine. One can recognise a Deacetylase sirtuin-type domain in the interval 20–301; that stretch reads RLLDELTLEG…LALADLLGWK (282 aa). NAD(+) is bound by residues 48–52 and 58–60; these read AGIST and DFR. Ser-63 bears the Phosphoserine mark. 130 to 133 serves as a coordination point for NAD(+); the sequence is QNID. His-150 acts as the Proton acceptor in catalysis. Residues Cys-158 and Cys-163 each coordinate Zn(2+). Ser-170 carries the post-translational modification Phosphoserine. Zn(2+) contacts are provided by Cys-184 and Cys-187. NAD(+) is bound by residues 225-226, 249-251, and Cys-287; these read TS and NKE. The tract at residues 312–350 is disordered; the sequence is ANIDAQSGSQASNPSATVSPRKSPPPAKEAARTKEKEEH. Residues 315 to 331 show a composition bias toward polar residues; sequence DAQSGSQASNPSATVSP. Residues Ser-330 and Ser-334 each carry the phosphoserine modification. Residues 340 to 350 show a composition bias toward basic and acidic residues; the sequence is EAARTKEKEEH.

The protein belongs to the sirtuin family. Class I subfamily. In terms of assembly, interacts with CDC20, FOXO3 and FZR1. Associates with microtubules in primary cortical mature neurons. Homotrimer. Interacts (via both phosphorylated, unphosphorylated, active or inactive forms) with HDAC6; the interaction is necessary for the complex to interact with alpha-tubulin, suggesting that these proteins belong to a large complex that deacetylates the cytoskeleton. Interacts with FOXO1; the interaction is disrupted upon serum-starvation or oxidative stress, leading to increased level of acetylated FOXO1 and induction of autophagy. Interacts with RELA; the interaction occurs in the cytoplasm and is increased in a TNF-alpha-dependent manner. Interacts with HOXA10; the interaction is direct. Interacts with YWHAB and YWHAG; the interactions occur in a AKT-dependent manner and increase SIRT2-dependent TP53 deacetylation. Interacts with MAPK1/ERK2 and MAPK3/ERK1; the interactions increase SIRT2 stability and deacetylation activity. Interacts (phosphorylated form) with KMT5A isoform 2; the interaction is direct, stimulates KMT5A-mediated methyltransferase activity on histone at 'Lys-20' (H4K20me1) and is increased in a H(2)O(2)-induced oxidative stress-dependent manner. Interacts with G6PD; the interaction is enhanced by H(2)O(2) treatment. Interacts with a G1/S-specific cyclin E-CDK2 complex. Interacts with AURKA, CDK5R1 (p35 form) and CDK5 and HIF1A. Interacts with the tRNA ligase SARS1; recruited to the VEGFA promoter via interaction with SARS1. Interacts with BEX4; negatively regulates alpha-tubulin deacetylation by SIRT2. Zn(2+) serves as cofactor. In terms of processing, phosphorylated at phosphoserine and phosphothreonine. Phosphorylated at Ser-330 by a mitotic kinase CDK1/cyclin B at the G2/M transition; phosphorylation regulates the delay in cell-cycle progression. Phosphorylated at Ser-330 by a mitotic kinase G1/S-specific cyclin E/Cdk2 complex; phosphorylation inactivates SIRT2-mediated alpha-tubulin deacetylation and thereby negatively regulates cell adhesion, cell migration and neurite outgrowth during neuronal differentiation. Phosphorylated by cyclin A/Cdk2 and p35-Cdk5 complexes and to a lesser extent by the cyclin D3/Cdk4 and cyclin B/Cdk1, in vitro. Dephosphorylated at Ser-330 by CDC14A and CDC14B around early anaphase. Post-translationally, acetylated by EP300; acetylation leads both to the decreased of SIRT2-mediated alpha-tubulin deacetylase activity and SIRT2-mediated down-regulation of TP53 transcriptional activity. Ubiquitinated. Expressed in the cerebellum, cerebral cortex and cervival spinal cord. Expressed in Purkinje cells, oligodendrocytes and Schwann cells (at protein level). Expressed in the central nervous system (CNS).

The protein localises to the nucleus. Its subcellular location is the cytoplasm. It is found in the perinuclear region. The protein resides in the cytoskeleton. It localises to the microtubule organizing center. The protein localises to the centrosome. Its subcellular location is the centriole. It is found in the spindle. The protein resides in the midbody. It localises to the chromosome. The protein localises to the perikaryon. Its subcellular location is the cell projection. It is found in the growth cone. The protein resides in the myelin membrane. It catalyses the reaction N(6)-acetyl-L-lysyl-[protein] + NAD(+) + H2O = 2''-O-acetyl-ADP-D-ribose + nicotinamide + L-lysyl-[protein]. It carries out the reaction N(6)-tetradecanoyl-L-lysyl-[protein] + NAD(+) + H2O = 2''-O-tetradecanoyl-ADP-D-ribose + nicotinamide + L-lysyl-[protein]. The enzyme catalyses N(6)-hexadecanoyl-L-lysyl-[protein] + NAD(+) + H2O = 2''-O-hexadecanoyl-ADP-D-ribose + nicotinamide + L-lysyl-[protein]. With respect to regulation, inhibited by Sirtinol, A3 and M15 small molecules. Inhibited by nicotinamide. Inhibited by a macrocyclic peptide inhibitor S2iL5. Inhibited by EP300-induced acetylation. In terms of biological role, NAD-dependent protein deacetylase, which deacetylates internal lysines on histone and alpha-tubulin as well as many other proteins such as key transcription factors. Participates in the modulation of multiple and diverse biological processes such as cell cycle control, genomic integrity, microtubule dynamics, cell differentiation, metabolic networks, and autophagy. Plays a major role in the control of cell cycle progression and genomic stability. Functions in the antephase checkpoint preventing precocious mitotic entry in response to microtubule stress agents, and hence allowing proper inheritance of chromosomes. Positively regulates the anaphase promoting complex/cyclosome (APC/C) ubiquitin ligase complex activity by deacetylating CDC20 and FZR1, then allowing progression through mitosis. Associates both with chromatin at transcriptional start sites (TSSs) and enhancers of active genes. Plays a role in cell cycle and chromatin compaction through epigenetic modulation of the regulation of histone H4 'Lys-20' methylation (H4K20me1) during early mitosis. Specifically deacetylates histone H4 at 'Lys-16' (H4K16ac) between the G2/M transition and metaphase enabling H4K20me1 deposition by KMT5A leading to ulterior levels of H4K20me2 and H4K20me3 deposition throughout cell cycle, and mitotic S-phase progression. Deacetylates KMT5A modulating KMT5A chromatin localization during the mitotic stress response. Also deacetylates histone H3 at 'Lys-57' (H3K56ac) during the mitotic G2/M transition. During oocyte meiosis progression, may deacetylate histone H4 at 'Lys-16' (H4K16ac) and alpha-tubulin, regulating spindle assembly and chromosome alignment by influencing microtubule dynamics and kinetochore function. Deacetylates histone H4 at 'Lys-16' (H4K16ac) at the VEGFA promoter and thereby contributes to regulate expression of VEGFA, a key regulator of angiogenesis. Deacetylates alpha-tubulin at 'Lys-40' and hence controls neuronal motility, oligodendroglial cell arbor projection processes and proliferation of non-neuronal cells. Phosphorylation at Ser-368 by a G1/S-specific cyclin E-CDK2 complex inactivates SIRT2-mediated alpha-tubulin deacetylation, negatively regulating cell adhesion, cell migration and neurite outgrowth during neuronal differentiation. Deacetylates PARD3 and participates in the regulation of Schwann cell peripheral myelination formation during early postnatal development and during postinjury remyelination. Involved in several cellular metabolic pathways. Plays a role in the regulation of blood glucose homeostasis by deacetylating and stabilizing phosphoenolpyruvate carboxykinase PCK1 activity in response to low nutrient availability. Acts as a key regulator in the pentose phosphate pathway (PPP) by deacetylating and activating the glucose-6-phosphate G6PD enzyme, and therefore, stimulates the production of cytosolic NADPH to counteract oxidative damage. Maintains energy homeostasis in response to nutrient deprivation as well as energy expenditure by inhibiting adipogenesis and promoting lipolysis. Attenuates adipocyte differentiation by deacetylating and promoting FOXO1 interaction to PPARG and subsequent repression of PPARG-dependent transcriptional activity. Plays a role in the regulation of lysosome-mediated degradation of protein aggregates by autophagy in neuronal cells. Deacetylates FOXO1 in response to oxidative stress or serum deprivation, thereby negatively regulating FOXO1-mediated autophagy. Deacetylates a broad range of transcription factors and co-regulators regulating target gene expression. Deacetylates transcriptional factor FOXO3 stimulating the ubiquitin ligase SCF(SKP2)-mediated FOXO3 ubiquitination and degradation. Deacetylates HIF1A and therefore promotes HIF1A degradation and inhibition of HIF1A transcriptional activity in tumor cells in response to hypoxia. Deacetylates RELA in the cytoplasm inhibiting NF-kappaB-dependent transcription activation upon TNF-alpha stimulation. Inhibits transcriptional activation by deacetylating p53/TP53 and EP300. Also deacetylates EIF5A. Functions as a negative regulator on oxidative stress-tolerance in response to anoxia-reoxygenation conditions. Plays a role as tumor suppressor. In addition to protein deacetylase activity, also has activity toward long-chain fatty acyl groups and mediates protein-lysine demyristoylation and depalmitoylation of target proteins, such as ARF6 and KRAS, thereby regulating their association with membranes. This chain is NAD-dependent protein deacetylase sirtuin-2 (Sirt2), found in Rattus norvegicus (Rat).